The following is a 2623-amino-acid chain: Immunoglobulin superfamily member 10 (2623 aa).

A signal peptide spans 1-28 (MKVKGRGITCLLVSFAVICLVATPGGKA). The LRRNT domain occupies 29–56 (CPRRCACYMPTEVHCTFRYLTSIPDSIP). 6 LRR repeats span residues 58-79 (NVER…DFSG), 82-103 (KLEL…TFSD), 106-127 (ALQV…TFYG), 130-151 (SLTR…VFYG), 154-175 (FLRL…TFVS), and 186-207 (FIKF…MVSY). Residues 219-281 (NPWTCDCHLK…VSAAAFQCAK (63 aa)) enclose the LRRCT domain. Asparagine 319 and asparagine 439 each carry an N-linked (GlcNAc...) asparagine glycan. 2 consecutive Ig-like C2-type domains span residues 461 to 567 (PRAE…YRIT) and 571 to 661 (PLVE…FQVS). 2 disulfides stabilise this stretch: cysteine 497/cysteine 551 and cysteine 595/cysteine 645. The N-linked (GlcNAc...) asparagine glycan is linked to asparagine 627. Disordered stretches follow at residues 668 to 692 (RPLE…HLKE) and 767 to 788 (AMPD…QLPN). N-linked (GlcNAc...) asparagine glycans are attached at residues asparagine 774 and asparagine 999. Disordered stretches follow at residues 1334 to 1376 (TQTE…AMTP) and 1434 to 1453 (STIA…TTTR). Residues 1335-1356 (QTERSRAQTIQREQEPQKKNRT) show a composition bias toward basic and acidic residues. Polar residues predominate over residues 1357-1373 (DPNISPDQSSGFTTPTA). Ig-like C2-type domains are found at residues 1648–1739 (PRIV…VTLS), 1745–1836 (PRIL…VKIQ), 1841–1933 (PPVI…VMLT), 1941–2034 (PRIE…VSLR), 2037–2135 (PAKI…VHLT), 2141–2229 (PRIR…YKLD), 2234–2331 (PPLI…LEVL), 2337–2427 (PTFR…VILE), 2432–2518 (PVIL…TLIT), and 2528–2623 (PRIT…IQVI). Cystine bridges form between cysteine 1670-cysteine 1723, cysteine 1767-cysteine 1820, and cysteine 1864-cysteine 1917. Asparagine 1899 and asparagine 1962 each carry an N-linked (GlcNAc...) asparagine glycan. 7 disulfide bridges follow: cysteine 1963–cysteine 2016, cysteine 2060–cysteine 2119, cysteine 2163–cysteine 2213, cysteine 2261–cysteine 2313, cysteine 2359–cysteine 2411, cysteine 2454–cysteine 2506, and cysteine 2550–cysteine 2605. A glycan (N-linked (GlcNAc...) asparagine) is linked at asparagine 2101. Tyrosine 2603 bears the Phosphotyrosine mark.

Its subcellular location is the secreted. Its function is as follows. Involved in the control of early migration of neurons expressing gonadotropin-releasing hormone (GNRH neurons). May be involved in the maintenance of osteochondroprogenitor cells pool. This Homo sapiens (Human) protein is Immunoglobulin superfamily member 10 (IGSF10).